The chain runs to 523 residues: MANINMADTVPSCDTYLLFNGETLLPIGVRAFIYTAVLAYCFIGLSAITGRFFKSMESIMRHSREVVTVDPHTNATIVKHEKVWNYTIADVALLAFGTSFPQISLATIDAIRNLGQLTAGGLGPGTLVGSAAFDLFPIHAVCVVMPRAGSKKKISDLGVWLVELFWSFWAYIWLYIILEVWTPRVITLWEALLTVLQYGLLLLHAYAQDKRWPYVSIPLARGERPEDWVPAEDASVDYDDNYDGIGDILPGQNEDIVDIFSAHSYSNEGYHHVSEEDVEESSTGLTLKNKWEDTHWFSIWWQQFVDAATLESSVSRKMDSTCLRVIGISWNLIIAPWKMLFAFVPPYEIAHGWIAFICSLIFISGIAYGVTKITDQISCVTGVSPYVIAFTALAAGTSWPDLVASKIAAERQITADSAITNITCSNSVNIYVGIGVPWLVDTMYNYFVYQKPLYIDNAAGLSFSLLVFFATSFGCITVLVLRRVILGAELGGPRMWAWATSVYFMILWVVFVVLSSLKISGVI.

Helical transmembrane passes span 24 to 44, 88 to 108, 125 to 145, 157 to 177, 185 to 205, 325 to 345, 349 to 369, 377 to 397, 428 to 448, 461 to 481, and 495 to 515; these read LLPI…CFIG, IADV…LATI, GTLV…CVVM, LGVW…LYII, VITL…LLHA, VIGI…AFVP, IAHG…IAYG, ISCV…AAGT, VNIY…NYFV, LSFS…VLVL, and MWAW…VVLS.

This sequence belongs to the Ca(2+):cation antiporter (CaCA) (TC 2.A.19) family. MHX subfamily.

Its subcellular location is the vacuole membrane. Its function is as follows. Vacuolar transporter that exchanges protons with Mg(2+), Zn(2+) and Fe(2+) ions. May control the partitioning of Mg(2+) and Zn(2+) between plant organs. The chain is Magnesium/proton exchanger 1 (MHX1) from Oryza sativa subsp. japonica (Rice).